Here is a 529-residue protein sequence, read N- to C-terminus: Lysophosphatidylcholine acyltransferase 2 (529 aa).

At 1-50 (MPPPHRVFALPRQQSLLLPAVINPFVHDLSLSTADITKCFLLGIILVPLR) the chain is on the cytoplasmic side. Residues 51–71 (AIFLLLVLLVMWPVSVIITFG) form a helical; Signal-anchor for type II membrane protein membrane-spanning segment. At 72-529 (QSLKGVVEPM…EDSASDKKDD (458 aa)) the chain is on the lumenal side. The HXXXXD motif signature appears at 128-133 (HSSFFD). Positions 202–205 (EGTC) match the EGTC motif motif. Asn-207 is a glycosylation site (N-linked (GlcNAc...) asparagine). EF-hand domains are found at residues 373–408 (PISP…LCRP), 410–445 (NNEE…ALGV), and 449–480 (DVHS…HPEY). Positions 386, 388, 390, 392, 397, 423, 425, 427, 429, 434, 458, 460, 462, 464, and 469 each coordinate Ca(2+).

The protein belongs to the 1-acyl-sn-glycerol-3-phosphate acyltransferase family.

It is found in the endoplasmic reticulum membrane. Its subcellular location is the golgi apparatus membrane. The protein localises to the cell membrane. It localises to the lipid droplet. The enzyme catalyses a 1-acyl-sn-glycero-3-phosphocholine + an acyl-CoA = a 1,2-diacyl-sn-glycero-3-phosphocholine + CoA. It catalyses the reaction a 1-O-alkyl-sn-glycero-3-phosphocholine + acetyl-CoA = a 1-O-alkyl-2-acetyl-sn-glycero-3-phosphocholine + CoA. It carries out the reaction a 1-acyl-sn-glycero-3-phosphate + an acyl-CoA = a 1,2-diacyl-sn-glycero-3-phosphate + CoA. The catalysed reaction is a 1-O-(1Z-alkenyl)-sn-glycero-3-phosphocholine + an acyl-CoA = a 1-O-(1Z-alkenyl)-2-acyl-sn-glycero-3-phosphocholine + CoA. The enzyme catalyses 1-hexadecanoyl-sn-glycero-3-phosphate + (9Z)-octadecenoyl-CoA = 1-hexadecanoyl-2-(9Z-octadecenoyl)-sn-glycero-3-phosphate + CoA. It catalyses the reaction 1-(9Z-octadecenoyl)-sn-glycero-3-phosphate + (9Z)-octadecenoyl-CoA = 1,2-di-(9Z-octadecenoyl)-sn-glycero-3-phosphate + CoA. It carries out the reaction 1-(9Z-octadecenoyl)-sn-glycero-3-phosphate + hexadecanoyl-CoA = 1-(9Z)-octadecenoyl-2-hexadecanoyl-sn-glycero-3-phosphate + CoA. The catalysed reaction is 1-heptadecanoyl-sn-glycero-3-phosphate + (9Z)-octadecenoyl-CoA = 1-heptadecanoyl-2-(9Z)-octadecenoyl-sn-glycero-3-phosphate + CoA. The enzyme catalyses 1-octadecanoyl-sn-glycero-3-phosphate + (9Z)-octadecenoyl-CoA = 1-octadecanoyl-2-(9Z-octadecenoyl)-sn-glycero-3-phosphate + CoA. It catalyses the reaction heptadecanoyl-CoA + 1-(9Z-octadecenoyl)-sn-glycero-3-phosphate = 1-(9Z)-octadecenoyl-2-heptadecanoyl-sn-glycero-3-phosphate + CoA. It carries out the reaction 1-(9Z-octadecenoyl)-sn-glycero-3-phosphate + (9Z,12Z)-octadecadienoyl-CoA = 1-(9Z)-octadecenoyl-2-(9Z,12Z)-octadecadienoyl-sn-glycero-3-phosphate + CoA. The catalysed reaction is 1-(9Z-octadecenoyl)-sn-glycero-3-phosphate + tetradecanoyl-CoA = 1-(9Z)-octadecenoyl-2-tetradecanoyl-sn-glycero-3-phosphate + CoA. The enzyme catalyses pentadecanoyl-CoA + 1-(9Z-octadecenoyl)-sn-glycero-3-phosphate = 1-(9Z)-octadecenoyl-2-pentadecanoyl-sn-glycero-3-phosphate + CoA. It catalyses the reaction nonadecanoyl-CoA + 1-(9Z-octadecenoyl)-sn-glycero-3-phosphate = 1-(9Z)-octadecenoyl-2-nonadecanoyl-sn-glycero-3-phosphate + CoA. It carries out the reaction 1-hexadecanoyl-sn-glycero-3-phosphocholine + (9Z)-octadecenoyl-CoA = 1-hexadecanoyl-2-(9Z-octadecenoyl)-sn-glycero-3-phosphocholine + CoA. The catalysed reaction is 1-O-hexadecyl-sn-glycero-3-phosphocholine + acetyl-CoA = 1-O-hexadecyl-2-acetyl-sn-glycero-3-phosphocholine + CoA. The enzyme catalyses 1-O-octadecyl-sn-glycero-3-phosphocholine + acetyl-CoA = 1-O-octadecyl-2-acetyl-sn-glycero-3-phosphocholine + CoA. It catalyses the reaction 1-hexadecanoyl-sn-glycero-3-phosphocholine + acetyl-CoA = 1-hexadecanoyl-2-acetyl-sn-glycero-3-phosphocholine + CoA. It carries out the reaction 1-octadecanoyl-sn-glycero-3-phosphocholine + acetyl-CoA = 1-octadecanoyl-2-acetyl-sn-glycero-3-phosphocholine + CoA. The catalysed reaction is a 1-O-(1Z-alkenyl)-sn-glycero-3-phosphocholine + acetyl-CoA = 1-O-(1Z)-alkenyl-2-acetyl-sn-glycero-3-phosphocholine + CoA. The enzyme catalyses 1-O-octadecyl-sn-glycero-3-phosphocholine + (5Z,8Z,11Z,14Z)-eicosatetraenoyl-CoA = 1-O-octadecyl-2-(5Z,8Z,11Z,14Z)-eicosatetraenoyl-sn-glycero-3-phosphocholine + CoA. The protein operates within lipid metabolism; phospholipid metabolism. Functionally, exhibits both acyltransferase and acetyltransferase activities. Activity is calcium-dependent. Catalyzes the conversion of lysophosphatidylcholine (1-acyl-sn-glycero-3-phosphocholine or LPC) into phosphatidylcholine (1,2-diacyl-sn-glycero-3-phosphocholine or PC). Catalyzes the conversion 1-acyl-sn-glycerol-3-phosphate (lysophosphatidic acid or LPA) into 1,2-diacyl-sn-glycerol-3-phosphate (phosphatidic acid or PA) by incorporating an acyl moiety at the sn-2 position of the glycerol backbone. Involved in platelet-activating factor (PAF) biosynthesis by catalyzing the conversion of the PAF precursor, 1-O-alkyl-sn-glycero-3-phosphocholine (lyso-PAF) into 1-O-alkyl-2-acetyl-sn-glycero-3-phosphocholine (PAF). This is Lysophosphatidylcholine acyltransferase 2 (lpcat2) from Danio rerio (Zebrafish).